We begin with the raw amino-acid sequence, 232 residues long: Ion-translocating oxidoreductase complex subunit E (232 aa).

Helical transmembrane passes span 18 to 38 (ALVQLLGLCPLLAVTATVTNG), 39 to 59 (LGLGLATTLVLIGSNATVSII), 69 to 89 (IPIFVMIIAAFVTVVQLLMNA), 93 to 113 (ELYQALGIFIPLIVTNCAIIG), 128 to 148 (AFDGLMMGLGFTVVLVLLGAM), and 182 to 202 (PFLLAILPPGAFLGMGLLIAA).

This sequence belongs to the NqrDE/RnfAE family. As to quaternary structure, the complex is composed of six subunits: RnfA, RnfB, RnfC, RnfD, RnfE and RnfG.

It is found in the cell inner membrane. Functionally, part of a membrane-bound complex that couples electron transfer with translocation of ions across the membrane. The sequence is that of Ion-translocating oxidoreductase complex subunit E from Pseudoalteromonas atlantica (strain T6c / ATCC BAA-1087).